The following is a 277-amino-acid chain: Large ribosomal subunit protein uL2 (277 aa).

Residues 219 to 277 (TVRGSVMNPNDHPHGGGEGKAPVGRKAPSTPWGKPALGLKTRNKKAKSDKLIVRRRNEK) form a disordered region. The segment covering 264–277 (AKSDKLIVRRRNEK) has biased composition (basic and acidic residues).

This sequence belongs to the universal ribosomal protein uL2 family. In terms of assembly, part of the 50S ribosomal subunit. Forms a bridge to the 30S subunit in the 70S ribosome.

Functionally, one of the primary rRNA binding proteins. Required for association of the 30S and 50S subunits to form the 70S ribosome, for tRNA binding and peptide bond formation. It has been suggested to have peptidyltransferase activity; this is somewhat controversial. Makes several contacts with the 16S rRNA in the 70S ribosome. The polypeptide is Large ribosomal subunit protein uL2 (Streptococcus gordonii (strain Challis / ATCC 35105 / BCRC 15272 / CH1 / DL1 / V288)).